The chain runs to 741 residues: 1,4-alpha-glucan branching enzyme GlgB (741 aa).

Asp420 serves as the catalytic Nucleophile. Glu473 functions as the Proton donor in the catalytic mechanism.

The protein belongs to the glycosyl hydrolase 13 family. GlgB subfamily. As to quaternary structure, monomer.

It carries out the reaction Transfers a segment of a (1-&gt;4)-alpha-D-glucan chain to a primary hydroxy group in a similar glucan chain.. It functions in the pathway glycan biosynthesis; glycogen biosynthesis. Functionally, catalyzes the formation of the alpha-1,6-glucosidic linkages in glycogen by scission of a 1,4-alpha-linked oligosaccharide from growing alpha-1,4-glucan chains and the subsequent attachment of the oligosaccharide to the alpha-1,6 position. In Pseudomonas syringae pv. tomato (strain ATCC BAA-871 / DC3000), this protein is 1,4-alpha-glucan branching enzyme GlgB.